We begin with the raw amino-acid sequence, 400 residues long: Cytoplasmic polyadenylated homeobox-like protein 2 (400 aa).

The segment at 1–29 (MSSQAFPAEEDHHNEERQTKKKRKTKHRH) is disordered. The span at 9-18 (EEDHHNEERQ) shows a compositional bias: basic and acidic residues. Over residues 19 to 29 (TKKKRKTKHRH) the composition is skewed to basic residues. Residues 24-83 (KTKHRHKFSEELLQELKEIFGENGYPDFTTRKTLANKFDCPVNVINNWFQNNRARLPPEE) constitute a DNA-binding region (homeobox).

The protein localises to the nucleus. The chain is Cytoplasmic polyadenylated homeobox-like protein 2 from Homo sapiens (Human).